Reading from the N-terminus, the 225-residue chain is Holliday junction branch migration complex subunit RuvA (225 aa).

A domain I region spans residues 1 to 71 (MISWISGELV…EDSDLLFGFS (71 aa)). Residues 72 to 150 (SKDQKNFFIE…NELKIQEEKS (79 aa)) form a domain II region. Residues 151–161 (KDEFHIKDNKI) form a flexible linker region. Positions 161-225 (INKIVSDIEL…LDNDSSNIVR (65 aa)) are domain III.

This sequence belongs to the RuvA family. In terms of assembly, homotetramer. Forms an RuvA(8)-RuvB(12)-Holliday junction (HJ) complex. HJ DNA is sandwiched between 2 RuvA tetramers; dsDNA enters through RuvA and exits via RuvB. An RuvB hexamer assembles on each DNA strand where it exits the tetramer. Each RuvB hexamer is contacted by two RuvA subunits (via domain III) on 2 adjacent RuvB subunits; this complex drives branch migration. In the full resolvosome a probable DNA-RuvA(4)-RuvB(12)-RuvC(2) complex forms which resolves the HJ.

The protein localises to the cytoplasm. Its function is as follows. The RuvA-RuvB-RuvC complex processes Holliday junction (HJ) DNA during genetic recombination and DNA repair, while the RuvA-RuvB complex plays an important role in the rescue of blocked DNA replication forks via replication fork reversal (RFR). RuvA specifically binds to HJ cruciform DNA, conferring on it an open structure. The RuvB hexamer acts as an ATP-dependent pump, pulling dsDNA into and through the RuvAB complex. HJ branch migration allows RuvC to scan DNA until it finds its consensus sequence, where it cleaves and resolves the cruciform DNA. The chain is Holliday junction branch migration complex subunit RuvA from Prochlorococcus marinus (strain MIT 9312).